The following is a 64-amino-acid chain: Large ribosomal subunit protein bL35 (64 aa).

Residues 1-10 (MPKMKTNSAA) show a composition bias toward polar residues. The interval 1-64 (MPKMKTNSAA…SKNMKKLLGR (64 aa)) is disordered.

Belongs to the bacterial ribosomal protein bL35 family.

The chain is Large ribosomal subunit protein bL35 from Bifidobacterium adolescentis (strain ATCC 15703 / DSM 20083 / NCTC 11814 / E194a).